Here is a 351-residue protein sequence, read N- to C-terminus: Biotin synthase (351 aa).

The 219-residue stretch at Asn44–Gln262 folds into the Radical SAM core domain. 3 residues coordinate [4Fe-4S] cluster: Cys59, Cys63, and Cys66. Cys103, Cys134, Cys194, and Arg266 together coordinate [2Fe-2S] cluster.

The protein belongs to the radical SAM superfamily. Biotin synthase family. Homodimer. It depends on [4Fe-4S] cluster as a cofactor. [2Fe-2S] cluster is required as a cofactor.

The enzyme catalyses (4R,5S)-dethiobiotin + (sulfur carrier)-SH + 2 reduced [2Fe-2S]-[ferredoxin] + 2 S-adenosyl-L-methionine = (sulfur carrier)-H + biotin + 2 5'-deoxyadenosine + 2 L-methionine + 2 oxidized [2Fe-2S]-[ferredoxin]. Its pathway is cofactor biosynthesis; biotin biosynthesis; biotin from 7,8-diaminononanoate: step 2/2. Its function is as follows. Catalyzes the conversion of dethiobiotin (DTB) to biotin by the insertion of a sulfur atom into dethiobiotin via a radical-based mechanism. The chain is Biotin synthase from Pseudomonas fluorescens (strain Pf0-1).